The sequence spans 149 residues: Arginine repressor (149 aa).

It belongs to the ArgR family.

It localises to the cytoplasm. Its pathway is amino-acid biosynthesis; L-arginine biosynthesis [regulation]. In terms of biological role, regulates arginine biosynthesis genes. This chain is Arginine repressor, found in Alkaliphilus metalliredigens (strain QYMF).